The sequence spans 1170 residues: WD repeat-containing protein 35 (1170 aa).

WD repeat units follow at residues 12 to 51, 69 to 108, 113 to 152, 154 to 193, and 491 to 528; these read PNNV…DDSK, GHSG…WYEE, RNKS…IWGK, LKGI…IMKM, and GTRD…LIQK.

In terms of assembly, component of the IFT complex A (IFT-A) complex. IFT-A complex is divided into a core subcomplex composed of IFT122:IFT140:WDR19 which is associated with TULP3 and a peripheral subcomplex composed of IFT43:WDR35:TTC21B. Interacts directy with IFT122, ITF43 and TTC21B. Interacts with IFT43. Interacts with CFAP61. Expressed at high levels in testis and at lower levels in the brain (at protein level). Also present in other tissues, including heart, uterus, spinal cord, ovary, liver, kidney, lung, pancreas and stomach.

It is found in the cytoplasm. The protein resides in the cytoskeleton. Its subcellular location is the microtubule organizing center. It localises to the centrosome. The protein localises to the cilium axoneme. It is found in the cilium basal body. Its function is as follows. As a component of the IFT complex A (IFT-A), a complex required for retrograde ciliary transport and entry into cilia of G protein-coupled receptors (GPCRs), it is involved in ciliogenesis and ciliary protein trafficking. May promote CASP3 activation and TNF-stimulated apoptosis. The chain is WD repeat-containing protein 35 (Wdr35) from Rattus norvegicus (Rat).